Consider the following 94-residue polypeptide: MLHLVVYDISDDGSRARLAKLLEKFGLQRVQYSAFRGELNPNDREVLARQVGKFVRDDRDCIFIIPLCQRCSSTAIVISNTGVELVKEKGVEFV.

A Mg(2+)-binding site is contributed by Asp-8.

The protein belongs to the CRISPR-associated endoribonuclease Cas2 protein family. Homodimer, forms a heterotetramer with a Cas1 homodimer. Mg(2+) serves as cofactor.

In terms of biological role, CRISPR (clustered regularly interspaced short palindromic repeat), is an adaptive immune system that provides protection against mobile genetic elements (viruses, transposable elements and conjugative plasmids). CRISPR clusters contain sequences complementary to antecedent mobile elements and target invading nucleic acids. CRISPR clusters are transcribed and processed into CRISPR RNA (crRNA). Involved in the integration of spacer DNA into the CRISPR cassette. Functions as a ssRNA-specific endoribonuclease. In Archaeoglobus fulgidus (strain ATCC 49558 / DSM 4304 / JCM 9628 / NBRC 100126 / VC-16), this protein is CRISPR-associated endoribonuclease Cas2 1 (cas21).